The chain runs to 726 residues: Catalase-peroxidase (726 aa).

Residues 91-214 constitute a cross-link (tryptophyl-tyrosyl-methioninium (Trp-Tyr) (with M-240)); that stretch reads WHSAGTYRIA…LGAVQMGLIY (124 aa). Catalysis depends on His-92, which acts as the Proton acceptor. A cross-link (tryptophyl-tyrosyl-methioninium (Tyr-Met) (with W-91)) is located at residues 214-240; sequence YVNPEGPNGNPDPLAAARDIRETFARM. Residue His-255 coordinates heme b. Residues 335–362 form a disordered region; sequence AHQWRPKAGAGADSVPDPHDPNKRRTPS.

Belongs to the peroxidase family. Peroxidase/catalase subfamily. Homodimer or homotetramer. The cofactor is heme b. Post-translationally, formation of the three residue Trp-Tyr-Met cross-link is important for the catalase, but not the peroxidase activity of the enzyme.

The enzyme catalyses H2O2 + AH2 = A + 2 H2O. It catalyses the reaction 2 H2O2 = O2 + 2 H2O. In terms of biological role, bifunctional enzyme with both catalase and broad-spectrum peroxidase activity. This is Catalase-peroxidase from Pseudomonas fluorescens (strain ATCC BAA-477 / NRRL B-23932 / Pf-5).